The primary structure comprises 229 residues: MTPQLLLALVLWASCPPCSGRKGPPAALTLPRVQCRASRYPIAVDCSWTLPPAPNSTSPVSFIATYRLGMAARGHSWPCLQQTPTSTSCTITDVQLFSMAPYVLNVTAVHPWGSSSSFVPFITEHIIKPDPPEGVRLSPLAERQLQVQWEPPGSWPFPEIFSLKYWIRYKRQGAARFHRVGPIEATSFILRAVRPRARYYVQVAAQDLTDYGELSDWSLPATATMSLGK.

The first 20 residues, 1 to 20, serve as a signal peptide directing secretion; the sequence is MTPQLLLALVLWASCPPCSG. 2 Fibronectin type-III domains span residues 24 to 130 and 131 to 227; these read PPAA…IKPD and PPEG…TMSL. 2 N-linked (GlcNAc...) asparagine glycosylation sites follow: asparagine 55 and asparagine 105.

The protein belongs to the type I cytokine receptor family. Type 3 subfamily. In terms of assembly, heterodimer with IL27/IL27A; not disulfide-linked. This heterodimer is known as interleukin IL-27. Heterodimer with IL12A; not disulfide-linked. This heterodimer is known as interleukin IL-35. Interacts with SQSTM1.

It localises to the secreted. In terms of biological role, associates with IL27 to form the IL-27 interleukin, a heterodimeric cytokine which functions in innate immunity. IL-27 has pro- and anti-inflammatory properties, that can regulate T-helper cell development, suppress T-cell proliferation, stimulate cytotoxic T-cell activity, induce isotype switching in B-cells, and that has diverse effects on innate immune cells. Among its target cells are CD4 T-helper cells which can differentiate in type 1 effector cells (TH1), type 2 effector cells (TH2) and IL17 producing helper T-cells (TH17). It drives rapid clonal expansion of naive but not memory CD4 T-cells. It also strongly synergizes with IL-12 to trigger interferon-gamma/IFN-gamma production of naive CD4 T-cells, binds to the cytokine receptor WSX-1/TCCR. Another important role of IL-27 is its antitumor activity as well as its antiangiogenic activity with activation of production of antiangiogenic chemokines. This is Interleukin-27 subunit beta (EBI3) from Homo sapiens (Human).